A 307-amino-acid chain; its full sequence is Putative F-box protein PP2-B6 (307 aa).

The 47-residue stretch at 42–88 folds into the F-box domain; the sequence is HSPFDDLPEDCISNIISFTSPRDVCVSASVSKSFAHAVQCDSIWEKF.

The polypeptide is Putative F-box protein PP2-B6 (PP2B6) (Arabidopsis thaliana (Mouse-ear cress)).